Reading from the N-terminus, the 149-residue chain is Large ribosomal subunit protein bL20m (149 aa).

The N-terminal 9 residues, Met1–Trp9, are a transit peptide targeting the mitochondrion.

The protein belongs to the bacterial ribosomal protein bL20 family. Component of the mitochondrial ribosome large subunit (39S) which comprises a 16S rRNA and about 50 distinct proteins.

It is found in the mitochondrion. The sequence is that of Large ribosomal subunit protein bL20m (mrpl20) from Xenopus laevis (African clawed frog).